Reading from the N-terminus, the 144-residue chain is Transcription antitermination protein NusB (144 aa).

This sequence belongs to the NusB family.

Functionally, involved in transcription antitermination. Required for transcription of ribosomal RNA (rRNA) genes. Binds specifically to the boxA antiterminator sequence of the ribosomal RNA (rrn) operons. The sequence is that of Transcription antitermination protein NusB from Streptococcus thermophilus (strain CNRZ 1066).